Reading from the N-terminus, the 660-residue chain is ATP-dependent zinc metalloprotease FtsH (660 aa).

The segment at 1–20 (MMPSSQRPSPRGSRQSPSPD) is disordered. Topologically, residues 1–24 (MMPSSQRPSPRGSRQSPSPDQRGR) are cytoplasmic. A helical transmembrane segment spans residues 25–45 (IAFAILATLVVAVLLLTLFSH). Over 46 to 118 (APSGQPLGYS…VQVSYITPGP (73 aa)) the chain is Extracellular. A helical transmembrane segment spans residues 119 to 139 (GIASTIIEYVIFFGIFIGIWV). Residues 140–660 (YLTRRTQGSV…ASHDDTDPVS (521 aa)) lie on the Cytoplasmic side of the membrane. 213–220 (GPPGTGKT) lines the ATP pocket. H435 serves as a coordination point for Zn(2+). Residue E436 is part of the active site. Residues H439 and D511 each contribute to the Zn(2+) site.

This sequence in the central section; belongs to the AAA ATPase family. It in the C-terminal section; belongs to the peptidase M41 family. Homohexamer. The cofactor is Zn(2+).

The protein resides in the cell membrane. Functionally, acts as a processive, ATP-dependent zinc metallopeptidase for both cytoplasmic and membrane proteins. Plays a role in the quality control of integral membrane proteins. The sequence is that of ATP-dependent zinc metalloprotease FtsH from Acidimicrobium ferrooxidans (strain DSM 10331 / JCM 15462 / NBRC 103882 / ICP).